A 311-amino-acid polypeptide reads, in one-letter code: MANPLYQKHIISINDLSRDDLNLVLATAAKLKANPQPELLKHKVIASCFFEASTRTRLSFETSMHRLGASVVGFSDSANTSLGKKGETLADTISVISTYVDAIVMRHPQEGAARLATEFSGNVPVLNAGDGSNQHPTQTLLDLFTIQETQGRLDNLHVAMVGDLKYGRTVHSLTQALAKFDGNRFYFIAPDALAMPQYILDMLDEKGIAWSLHSSIEEVIAEVDILYMTRVQKERLDPSEYANVKAQFVLRASDLHNAKANMKVLHPLPRVDEIATDVDKTPHAWYFQQAGNGIFARQALLALVLNRDLVL.

Carbamoyl phosphate is bound by residues arginine 55 and threonine 56. Lysine 85 serves as a coordination point for L-aspartate. Positions 106, 135, and 138 each coordinate carbamoyl phosphate. Positions 168 and 230 each coordinate L-aspartate. Positions 268 and 269 each coordinate carbamoyl phosphate.

Belongs to the aspartate/ornithine carbamoyltransferase superfamily. ATCase family. Heterododecamer (2C3:3R2) of six catalytic PyrB chains organized as two trimers (C3), and six regulatory PyrI chains organized as three dimers (R2).

It carries out the reaction carbamoyl phosphate + L-aspartate = N-carbamoyl-L-aspartate + phosphate + H(+). The protein operates within pyrimidine metabolism; UMP biosynthesis via de novo pathway; (S)-dihydroorotate from bicarbonate: step 2/3. Catalyzes the condensation of carbamoyl phosphate and aspartate to form carbamoyl aspartate and inorganic phosphate, the committed step in the de novo pyrimidine nucleotide biosynthesis pathway. The sequence is that of Aspartate carbamoyltransferase catalytic subunit from Escherichia coli (strain 55989 / EAEC).